A 463-amino-acid polypeptide reads, in one-letter code: ATP-dependent protease ATPase subunit HslU (463 aa).

Residues Val21, 63 to 68 (GVGKTE), Asp276, Glu341, and Arg413 contribute to the ATP site.

It belongs to the ClpX chaperone family. HslU subfamily. In terms of assembly, a double ring-shaped homohexamer of HslV is capped on each side by a ring-shaped HslU homohexamer. The assembly of the HslU/HslV complex is dependent on binding of ATP.

It localises to the cytoplasm. Its function is as follows. ATPase subunit of a proteasome-like degradation complex; this subunit has chaperone activity. The binding of ATP and its subsequent hydrolysis by HslU are essential for unfolding of protein substrates subsequently hydrolyzed by HslV. HslU recognizes the N-terminal part of its protein substrates and unfolds these before they are guided to HslV for hydrolysis. The chain is ATP-dependent protease ATPase subunit HslU from Thermotoga neapolitana (strain ATCC 49049 / DSM 4359 / NBRC 107923 / NS-E).